The primary structure comprises 406 residues: 5-cytosine rRNA methyltransferase NSUN4 (406 aa).

Residues Gly207, Gly208, Lys209, Asp226, Arg231, Asp259, Gly260, and Asp277 each coordinate S-adenosyl-L-methionine. Catalysis depends on Cys332, which acts as the Nucleophile.

Belongs to the class I-like SAM-binding methyltransferase superfamily. RsmB/NOP family.

The protein resides in the mitochondrion. It carries out the reaction a cytidine in rRNA + S-adenosyl-L-methionine = a 5-methylcytidine in rRNA + S-adenosyl-L-homocysteine + H(+). The catalysed reaction is a cytidine in mRNA + S-adenosyl-L-methionine = a 5-methylcytidine in mRNA + S-adenosyl-L-homocysteine + H(+). Functionally, involved in mitochondrial ribosome large subunit biogenesis. Its function is as follows. Mitochondrial RNA cytosine C(5)-methyltransferase that methylates cytosine to 5-methylcytosine (m5C) in various RNAs, such as rRNAs, mRNAs and some long non-coding RNAs (lncRNAs). Involved in mitochondrial ribosome small subunit (SSU) maturation by catalyzing methylation of mitochondrial 12S rRNA. In Xenopus tropicalis (Western clawed frog), this protein is 5-cytosine rRNA methyltransferase NSUN4 (nsun4).